Reading from the N-terminus, the 402-residue chain is Cytochrome b561 and DOMON domain-containing protein At4g17280 (402 aa).

Residues 1-31 (MSNHMSIMKFLNQILCLSLILSISMTTLSFA) form the signal peptide. The DOMON domain maps to 54–171 (LDSFLHYTYE…GTINTVWQDG (118 aa)). The region spanning 183–379 (TSGNNVRSVS…LEAFTWYVVI (197 aa)) is the Cytochrome b561 domain. Helical transmembrane passes span 218-238 (IHGI…AIIA) and 250-270 (AWFY…VAGW). Heme b-binding residues include H219, H255, and H288. A helical membrane pass occupies residues 290–310 (AIGIALFSLATVQVFAMFLRP). A heme b-binding site is contributed by H324. 2 consecutive transmembrane segments (helical) span residues 326 to 346 (TIGY…LGIL) and 359 to 379 (IIVV…YVVI).

Heme b is required as a cofactor.

The protein resides in the membrane. In terms of biological role, may act as a catecholamine-responsive trans-membrane electron transporter. This Arabidopsis thaliana (Mouse-ear cress) protein is Cytochrome b561 and DOMON domain-containing protein At4g17280.